The following is a 143-amino-acid chain: MKNTSALAETAALWAAVRFTADGLVPVIAQQHDSGEVLMMAWMNREALEETLVTGKACYWSRSRGRLWRKGESSGQTQKVLALRLDCDGDTILLLVDQTGVACHTGRRSCFFNEVGPTGEITVVSAPLVTPEALYGAEGHSHP.

Asp-86 serves as a coordination point for Mg(2+). Residue Cys-87 participates in Zn(2+) binding. Mg(2+) is bound by residues Asp-88 and Asp-90. Positions 103 and 110 each coordinate Zn(2+).

This sequence belongs to the PRA-CH family. Homodimer. Mg(2+) is required as a cofactor. It depends on Zn(2+) as a cofactor.

The protein resides in the cytoplasm. The enzyme catalyses 1-(5-phospho-beta-D-ribosyl)-5'-AMP + H2O = 1-(5-phospho-beta-D-ribosyl)-5-[(5-phospho-beta-D-ribosylamino)methylideneamino]imidazole-4-carboxamide. The protein operates within amino-acid biosynthesis; L-histidine biosynthesis; L-histidine from 5-phospho-alpha-D-ribose 1-diphosphate: step 3/9. In terms of biological role, catalyzes the hydrolysis of the adenine ring of phosphoribosyl-AMP. The protein is Phosphoribosyl-AMP cyclohydrolase of Rhodospirillum rubrum (strain ATCC 11170 / ATH 1.1.1 / DSM 467 / LMG 4362 / NCIMB 8255 / S1).